A 1025-amino-acid polypeptide reads, in one-letter code: Multidrug resistance protein MdtC (1025 aa).

A run of 12 helical transmembrane segments spans residues 3 to 23 (FFAL…AITL), 333 to 353 (EVEQ…FLFL), 360 to 380 (IIPA…MYLC), 387 to 407 (LSLM…IVVL), 431 to 451 (VGFT…PLLL), 469 to 489 (VAIG…CGWM), 528 to 548 (LVGV…ISIP), 853 to 873 (VILI…LYES), 875 to 895 (VHPL…LLAL), 897 to 917 (LFNA…IGIV), 953 to 973 (PIMM…LSGG), and 984 to 1004 (ITIV…TPVV).

It belongs to the resistance-nodulation-cell division (RND) (TC 2.A.6) family. MdtC subfamily. In terms of assembly, part of a tripartite efflux system composed of MdtA, MdtB and MdtC. MdtC forms a heteromultimer with MdtB.

The protein localises to the cell inner membrane. Functionally, the MdtABC tripartite complex confers resistance against novobiocin and deoxycholate. This chain is Multidrug resistance protein MdtC, found in Escherichia coli O9:H4 (strain HS).